We begin with the raw amino-acid sequence, 371 residues long: Thyroid transcription factor 1 (371 aa).

Positions 161 to 220 form a DNA-binding region, homeobox; that stretch reads RRKRRVLFSQAQVYELERRFKQQKYLSAPEREHLASMIHLTPTQVKIWFQNHRYKMKRQA. Disordered stretches follow at residues 219-294 and 308-342; these read QAKD…QQQA and SGGP…ALQG. A compositionally biased stretch (gly residues) spans 233-243; that stretch reads SGGGGGGGGAG. 2 stretches are compositionally biased toward low complexity: residues 244-253 and 272-294; these read CPQQQQAQQQ and AGAP…QQQA.

It belongs to the NK-2 homeobox family. In terms of processing, phosphorylated on serine residues. Thyroid, lung and CNS.

It localises to the nucleus. Transcription factor that binds and activates the promoter of thyroid specific genes such as thyroglobulin, thyroperoxidase, and thyrotropin receptor. Crucial in the maintenance of the thyroid differentiation phenotype. May play a role in lung development and surfactant homeostasis. In Canis lupus familiaris (Dog), this protein is Thyroid transcription factor 1 (TITF1).